The chain runs to 54 residues: MLSWALTFLIIAIIAAVLGFGGIAGTAAGIAKILFVVFLVLFIISFIMGRRPRM.

The next 2 helical transmembrane spans lie at 4-24 (WALT…GGIA) and 28-48 (AGIA…SFIM).

The protein belongs to the UPF0391 family.

The protein localises to the cell membrane. The chain is UPF0391 membrane protein Pmen_0080 from Ectopseudomonas mendocina (strain ymp) (Pseudomonas mendocina).